A 207-amino-acid chain; its full sequence is Superoxide dismutase [Mn] (207 aa).

Residues histidine 27, histidine 82, aspartate 169, and histidine 173 each contribute to the Mn(2+) site.

It belongs to the iron/manganese superoxide dismutase family. Mn(2+) serves as cofactor.

The enzyme catalyses 2 superoxide + 2 H(+) = H2O2 + O2. In terms of biological role, destroys superoxide anion radicals which are normally produced within the cells and which are toxic to biological systems. This Yersinia enterocolitica protein is Superoxide dismutase [Mn] (sodA).